The following is a 159-amino-acid chain: SsrA-binding protein (159 aa).

The segment at 137–159 (KRQTEKERDWEREKQRLFQRDQR) is disordered.

The protein belongs to the SmpB family.

The protein localises to the cytoplasm. In terms of biological role, required for rescue of stalled ribosomes mediated by trans-translation. Binds to transfer-messenger RNA (tmRNA), required for stable association of tmRNA with ribosomes. tmRNA and SmpB together mimic tRNA shape, replacing the anticodon stem-loop with SmpB. tmRNA is encoded by the ssrA gene; the 2 termini fold to resemble tRNA(Ala) and it encodes a 'tag peptide', a short internal open reading frame. During trans-translation Ala-aminoacylated tmRNA acts like a tRNA, entering the A-site of stalled ribosomes, displacing the stalled mRNA. The ribosome then switches to translate the ORF on the tmRNA; the nascent peptide is terminated with the 'tag peptide' encoded by the tmRNA and targeted for degradation. The ribosome is freed to recommence translation, which seems to be the essential function of trans-translation. This is SsrA-binding protein from Cellvibrio japonicus (strain Ueda107) (Pseudomonas fluorescens subsp. cellulosa).